Reading from the N-terminus, the 163-residue chain is Phosphopantetheine adenylyltransferase (163 aa).

Serine 10 is a binding site for substrate. ATP-binding positions include 10–11 (SF) and histidine 18. Substrate contacts are provided by lysine 42, leucine 74, and arginine 88. Residues 89 to 91 (GLR), glutamate 99, and 124 to 130 (YSFLSSS) each bind ATP.

It belongs to the bacterial CoaD family. In terms of assembly, homohexamer. Mg(2+) serves as cofactor.

Its subcellular location is the cytoplasm. It catalyses the reaction (R)-4'-phosphopantetheine + ATP + H(+) = 3'-dephospho-CoA + diphosphate. Its pathway is cofactor biosynthesis; coenzyme A biosynthesis; CoA from (R)-pantothenate: step 4/5. Its function is as follows. Reversibly transfers an adenylyl group from ATP to 4'-phosphopantetheine, yielding dephospho-CoA (dPCoA) and pyrophosphate. This is Phosphopantetheine adenylyltransferase from Bacillus anthracis (strain A0248).